We begin with the raw amino-acid sequence, 253 residues long: Ribulose bisphosphate carboxylase large chain (253 aa).

Asn-35 and Thr-85 together coordinate substrate. Lys-87 functions as the Proton acceptor in the catalytic mechanism. Lys-89 provides a ligand contact to substrate. Mg(2+) is bound by residues Lys-113, Asp-115, and Glu-116. Position 113 is an N6-carboxylysine (Lys-113). His-206 (proton acceptor) is an active-site residue. Positions 207 and 239 each coordinate substrate.

It belongs to the RuBisCO large chain family. Type I subfamily. As to quaternary structure, heterohexadecamer of 8 large chains and 8 small chains; disulfide-linked. The disulfide link is formed within the large subunit homodimers. The cofactor is Mg(2+). Post-translationally, the disulfide bond which can form in the large chain dimeric partners within the hexadecamer appears to be associated with oxidative stress and protein turnover.

The protein resides in the plastid. It is found in the chloroplast. It carries out the reaction 2 (2R)-3-phosphoglycerate + 2 H(+) = D-ribulose 1,5-bisphosphate + CO2 + H2O. The enzyme catalyses D-ribulose 1,5-bisphosphate + O2 = 2-phosphoglycolate + (2R)-3-phosphoglycerate + 2 H(+). RuBisCO catalyzes two reactions: the carboxylation of D-ribulose 1,5-bisphosphate, the primary event in carbon dioxide fixation, as well as the oxidative fragmentation of the pentose substrate in the photorespiration process. Both reactions occur simultaneously and in competition at the same active site. This chain is Ribulose bisphosphate carboxylase large chain (rbcL), found in Magnolia latahensis (Apocynophyllum latahense).